We begin with the raw amino-acid sequence, 251 residues long: L-xylulose reductase (251 aa).

Residue 13-42 participates in NADP(+) binding; it reads LVTGASQGIGKEICLSLAKAGAQVIAFARN. A substrate-binding site is contributed by serine 143. Tyrosine 156 (proton acceptor) is an active-site residue. Lysine 160 lines the NADP(+) pocket.

This sequence belongs to the short-chain dehydrogenases/reductases (SDR) family. As to quaternary structure, homotetramer. In terms of tissue distribution, expressed in intestine, gonad and spermatids (at protein level). Expressed in intestine, uterine seam, gonadal sheath cells, spermathecal-uterus valve and spermatids.

It is found in the cell membrane. It catalyses the reaction xylitol + NADP(+) = L-xylulose + NADPH + H(+). With respect to regulation, strongly inhibited by 10% dimethyl sulfoxide. In terms of biological role, catalyzes the NADPH-dependent reduction of L-xylulose, D-xylulose, L-(+) erythrulose, D-erythrose, D-threose, L-ribulose, 1,4-dibromo-2,3-butanedione and 2,3-heptanedione. Also active against isatin, 9,10-phenanthrenequinone, menadione, 2,3-hexaenadione and 3,4-hexahenadione. No activity observed when tested using NADH rather than NADPH. This Caenorhabditis elegans protein is L-xylulose reductase.